Reading from the N-terminus, the 396-residue chain is Ornithine aminotransferase 2 (396 aa).

Lys255 carries the N6-(pyridoxal phosphate)lysine modification.

The protein belongs to the class-III pyridoxal-phosphate-dependent aminotransferase family. OAT subfamily. Pyridoxal 5'-phosphate is required as a cofactor.

It is found in the cytoplasm. The catalysed reaction is a 2-oxocarboxylate + L-ornithine = L-glutamate 5-semialdehyde + an L-alpha-amino acid. The protein operates within amino-acid biosynthesis; L-proline biosynthesis; L-glutamate 5-semialdehyde from L-ornithine: step 1/1. In terms of biological role, catalyzes the interconversion of ornithine to glutamate semialdehyde. The polypeptide is Ornithine aminotransferase 2 (Staphylococcus aureus (strain MRSA252)).